The following is a 119-amino-acid chain: MNLEAYFPVLLFIIIGVGLGLALMTIGRILGPNNPDPDKLSPYECGFEAFEDARMKFDVRYYLIAILFILFDLETAFLFPWGVALRDIGWPGFFAMGVFLLEFLVGFVYIWKKGALDWE.

A run of 3 helical transmembrane segments spans residues 7 to 27 (FPVL…MTIG), 63 to 83 (LIAI…PWGV), and 88 to 108 (IGWP…VGFV).

Belongs to the complex I subunit 3 family. NDH-1 is composed of 14 different subunits. Subunits NuoA, H, J, K, L, M, N constitute the membrane sector of the complex.

The protein localises to the cell inner membrane. It catalyses the reaction a quinone + NADH + 5 H(+)(in) = a quinol + NAD(+) + 4 H(+)(out). Its function is as follows. NDH-1 shuttles electrons from NADH, via FMN and iron-sulfur (Fe-S) centers, to quinones in the respiratory chain. The immediate electron acceptor for the enzyme in this species is believed to be ubiquinone. Couples the redox reaction to proton translocation (for every two electrons transferred, four hydrogen ions are translocated across the cytoplasmic membrane), and thus conserves the redox energy in a proton gradient. The sequence is that of NADH-quinone oxidoreductase subunit A from Ralstonia nicotianae (strain ATCC BAA-1114 / GMI1000) (Ralstonia solanacearum).